The following is a 665-amino-acid chain: Secreted LysM effector Lys3 (665 aa).

Positions 1-19 are cleaved as a signal peptide; that stretch reads MLWLTVSLTGFALLGVVAA. N-linked (GlcNAc...) asparagine glycosylation is found at Asn-43 and Asn-153. LysM domains lie at 166-211, 216-264, and 303-349; these read RTYT…TLCL, TLRK…YICI, and KWYV…AYCV. A glycan (N-linked (GlcNAc...) asparagine) is linked at Asn-234. The N-linked (GlcNAc...) asparagine glycan is linked to Asn-398. The LysM 4 domain maps to 409-454; sequence SWSDAAKLNSCSFIAHINGVTVSQLLQWNPSLSKDSCSLSRELYYC. N-linked (GlcNAc...) asparagine glycosylation occurs at Asn-531. The segment at 585-610 is disordered; it reads SSVSMTNSAPATATSTGGPPAPTQDG. Low complexity predominate over residues 592–602; it reads SAPATATSTGG. Asn-614 is a glycosylation site (N-linked (GlcNAc...) asparagine). Positions 617-663 constitute a LysM 5 domain; that stretch reads KWHVVESGDGCWAIYTKYGITSDQLFEWNTKISKDCSNIWLGYAVCV.

Belongs to the secreted LysM effector family.

Functionally, might have a role in sequestration of chitin oligosaccharides (breakdown products of fungal cell walls that are released during invasion and act as triggers of host immunity) to dampen host defense. The sequence is that of Secreted LysM effector Lys3 from Pochonia chlamydosporia (strain 123) (Metacordyceps chlamydosporia).